The following is a 140-amino-acid chain: Large-conductance mechanosensitive channel 2 (140 aa).

3 consecutive transmembrane segments (helical) span residues 8–28 (FISK…AAFG), 30–50 (IVDS…FGGL), and 81–101 (GSFI…FLMV).

This sequence belongs to the MscL family. In terms of assembly, homopentamer.

Its subcellular location is the cell inner membrane. In terms of biological role, channel that opens in response to stretch forces in the membrane lipid bilayer. May participate in the regulation of osmotic pressure changes within the cell. This is Large-conductance mechanosensitive channel 2 from Mesorhizobium japonicum (strain LMG 29417 / CECT 9101 / MAFF 303099) (Mesorhizobium loti (strain MAFF 303099)).